The chain runs to 379 residues: Putative beta-glucosidase 6 (379 aa).

The first 20 residues, 1-20 (MEKTFALITIFLAFAFSGKC), serve as a signal peptide directing secretion. A beta-D-glucoside is bound by residues Q43, H141, and 186-187 (NE). Catalysis depends on E187, which acts as the Proton donor. Cysteines 206 and 213 form a disulfide. N217 carries an N-linked (GlcNAc...) asparagine glycan. Y329 lines the a beta-D-glucoside pocket. N362 is a glycosylation site (N-linked (GlcNAc...) asparagine).

The protein belongs to the glycosyl hydrolase 1 family.

The enzyme catalyses Hydrolysis of terminal, non-reducing beta-D-glucosyl residues with release of beta-D-glucose.. In Arabidopsis thaliana (Mouse-ear cress), this protein is Putative beta-glucosidase 6.